The following is a 432-amino-acid chain: Trigger factor (432 aa).

Positions Gly-162 to Pro-247 constitute a PPIase FKBP-type domain.

This sequence belongs to the FKBP-type PPIase family. Tig subfamily.

It localises to the cytoplasm. The enzyme catalyses [protein]-peptidylproline (omega=180) = [protein]-peptidylproline (omega=0). Involved in protein export. Acts as a chaperone by maintaining the newly synthesized protein in an open conformation. Functions as a peptidyl-prolyl cis-trans isomerase. This chain is Trigger factor, found in Thiobacillus denitrificans (strain ATCC 25259 / T1).